The sequence spans 1296 residues: Protein ORF75 (1296 aa).

It localises to the virion tegument. The polypeptide is Protein ORF75 (ORF75) (Homo sapiens (Human)).